A 352-amino-acid chain; its full sequence is Protein RecA (352 aa).

Position 65–72 (65–72 (GPESSGKT)) interacts with ATP.

Belongs to the RecA family.

It is found in the cytoplasm. In terms of biological role, can catalyze the hydrolysis of ATP in the presence of single-stranded DNA, the ATP-dependent uptake of single-stranded DNA by duplex DNA, and the ATP-dependent hybridization of homologous single-stranded DNAs. It interacts with LexA causing its activation and leading to its autocatalytic cleavage. The protein is Protein RecA of Pseudomonas fluorescens (strain Pf0-1).